Consider the following 212-residue polypeptide: Nascent polypeptide-associated complex subunit alpha (212 aa).

2 disordered regions span residues 1–54 (MSNP…SRNE) and 123–177 (QLAA…EDKD). Acidic residues predominate over residues 22–38 (AEDEGSDSSDSEAEGEE). The 66-residue stretch at 51–116 (SRNEKKARKS…AKIEDLNSQA (66 aa)) folds into the NAC-A/B domain. A compositionally biased stretch (basic and acidic residues) spans 128 to 157 (ESHDHAGHDHSGHDHSHDHGKGKAVDTEEK). Residues 158–169 (KEEEEDDTEEVD) are compositionally biased toward acidic residues. The region spanning 173 to 212 (LEDKDIELVMTQASVSRNKAVKALKENDNDIVNSIMALSI) is the UBA domain.

Belongs to the NAC-alpha family. In terms of assembly, part of the nascent polypeptide-associated complex (NAC), consisting of EGD2 and EGD1. NAC associates with ribosomes via EGD1.

Its subcellular location is the cytoplasm. The protein resides in the nucleus. Component of the nascent polypeptide-associated complex (NAC), a dynamic component of the ribosomal exit tunnel, protecting the emerging polypeptides from interaction with other cytoplasmic proteins to ensure appropriate nascent protein targeting. The NAC complex also promotes mitochondrial protein import by enhancing productive ribosome interactions with the outer mitochondrial membrane and blocks the inappropriate interaction of ribosomes translating non-secretory nascent polypeptides with translocation sites in the membrane of the endoplasmic reticulum. EGD2 may also be involved in transcription regulation. The polypeptide is Nascent polypeptide-associated complex subunit alpha (egd2) (Botryotinia fuckeliana (strain B05.10) (Noble rot fungus)).